Consider the following 447-residue polypeptide: Protein CLT1, chloroplastic (447 aa).

Residues 1–48 constitute a chloroplast transit peptide; the sequence is MATTSSDRLIAGLTASIGSIESRYANPAQSVSLICRNQINGAPPIVLR. Helical transmembrane passes span 103–123, 135–155, 172–192, 200–220, 228–248, 256–276, 304–324, 351–371, 387–407, and 413–433; these read MEIV…RVLY, FFLA…ILYF, LPFL…MAAA, TTVL…IFLG, ILGC…GSGA, GILW…DTVM, IFQV…WGIP, GAPL…ISLL, TVSV…LGVA, and GFVA…WTPS.

The protein belongs to the CRT-like transporter family.

It localises to the plastid. The protein localises to the chloroplast membrane. In terms of biological role, involved in thiol transport from the plastid to the cytosol. Transports probably both glutathione (GSH) and its precursor, gamma-glutamylcysteine (gamma-EC). Exhibits some functional redundancy with CLT3 in maintaining the root GSH pool. This chain is Protein CLT1, chloroplastic, found in Arabidopsis thaliana (Mouse-ear cress).